A 96-amino-acid polypeptide reads, in one-letter code: Co-chaperonin GroES (96 aa).

The protein belongs to the GroES chaperonin family. Heptamer of 7 subunits arranged in a ring. Interacts with the chaperonin GroEL.

The protein localises to the cytoplasm. Its function is as follows. Together with the chaperonin GroEL, plays an essential role in assisting protein folding. The GroEL-GroES system forms a nano-cage that allows encapsulation of the non-native substrate proteins and provides a physical environment optimized to promote and accelerate protein folding. GroES binds to the apical surface of the GroEL ring, thereby capping the opening of the GroEL channel. The sequence is that of Co-chaperonin GroES from Geotalea daltonii (strain DSM 22248 / JCM 15807 / FRC-32) (Geobacter daltonii).